Reading from the N-terminus, the 407-residue chain is Phosphopentomutase (407 aa).

Asp10, Asp306, His311, Asp347, His348, and His359 together coordinate Mn(2+).

Belongs to the phosphopentomutase family. Mn(2+) is required as a cofactor.

It is found in the cytoplasm. The catalysed reaction is 2-deoxy-alpha-D-ribose 1-phosphate = 2-deoxy-D-ribose 5-phosphate. It catalyses the reaction alpha-D-ribose 1-phosphate = D-ribose 5-phosphate. The protein operates within carbohydrate degradation; 2-deoxy-D-ribose 1-phosphate degradation; D-glyceraldehyde 3-phosphate and acetaldehyde from 2-deoxy-alpha-D-ribose 1-phosphate: step 1/2. Functionally, isomerase that catalyzes the conversion of deoxy-ribose 1-phosphate (dRib-1-P) and ribose 1-phosphate (Rib-1-P) to deoxy-ribose 5-phosphate (dRib-5-P) and ribose 5-phosphate (Rib-5-P), respectively. In Yersinia pestis bv. Antiqua (strain Angola), this protein is Phosphopentomutase.